Reading from the N-terminus, the 655-residue chain is Acetyl-coenzyme A synthetase (655 aa).

CoA is bound by residues 196–199 (RGGR) and Thr-316. Residues 392 to 394 (GEP), 416 to 421 (DTWWQT), Asp-508, and Arg-523 each bind ATP. Ser-531 contributes to the CoA binding site. Residue Arg-534 participates in ATP binding. Residues Val-545, His-547, and Val-550 each contribute to the Mg(2+) site. Lys-620 bears the N6-acetyllysine mark.

It belongs to the ATP-dependent AMP-binding enzyme family. Mg(2+) serves as cofactor. Post-translationally, acetylated. Deacetylation by the SIR2-homolog deacetylase activates the enzyme.

The catalysed reaction is acetate + ATP + CoA = acetyl-CoA + AMP + diphosphate. Functionally, catalyzes the conversion of acetate into acetyl-CoA (AcCoA), an essential intermediate at the junction of anabolic and catabolic pathways. AcsA undergoes a two-step reaction. In the first half reaction, AcsA combines acetate with ATP to form acetyl-adenylate (AcAMP) intermediate. In the second half reaction, it can then transfer the acetyl group from AcAMP to the sulfhydryl group of CoA, forming the product AcCoA. This chain is Acetyl-coenzyme A synthetase, found in Nitrosomonas europaea (strain ATCC 19718 / CIP 103999 / KCTC 2705 / NBRC 14298).